The following is a 274-amino-acid chain: NH(3)-dependent NAD(+) synthetase (274 aa).

46–53 contacts ATP; the sequence is GISGGQDS. Aspartate 52 contacts Mg(2+). Arginine 140 contributes to the deamido-NAD(+) binding site. Threonine 160 contacts ATP. Mg(2+) is bound at residue glutamate 165. Positions 173 and 180 each coordinate deamido-NAD(+). Lysine 189 and threonine 211 together coordinate ATP. 260-261 lines the deamido-NAD(+) pocket; the sequence is HK.

It belongs to the NAD synthetase family. Homodimer.

The catalysed reaction is deamido-NAD(+) + NH4(+) + ATP = AMP + diphosphate + NAD(+) + H(+). It functions in the pathway cofactor biosynthesis; NAD(+) biosynthesis; NAD(+) from deamido-NAD(+) (ammonia route): step 1/1. Functionally, catalyzes the ATP-dependent amidation of deamido-NAD to form NAD. Uses ammonia as a nitrogen source. In Rhodococcus erythropolis (strain PR4 / NBRC 100887), this protein is NH(3)-dependent NAD(+) synthetase.